The following is a 532-amino-acid chain: Chaperonin GroEL 2 (532 aa).

Residues 30–33, Lys51, 87–91, Gly415, 479–481, and Asp495 contribute to the ATP site; these read TLGP, DGTTT, and NAA.

It belongs to the chaperonin (HSP60) family. As to quaternary structure, forms a cylinder of 14 subunits composed of two heptameric rings stacked back-to-back. Interacts with the co-chaperonin GroES.

Its subcellular location is the cytoplasm. The enzyme catalyses ATP + H2O + a folded polypeptide = ADP + phosphate + an unfolded polypeptide.. Its function is as follows. Together with its co-chaperonin GroES, plays an essential role in assisting protein folding. The GroEL-GroES system forms a nano-cage that allows encapsulation of the non-native substrate proteins and provides a physical environment optimized to promote and accelerate protein folding. The polypeptide is Chaperonin GroEL 2 (Vibrio parahaemolyticus serotype O3:K6 (strain RIMD 2210633)).